The chain runs to 187 residues: Shikimate kinase (187 aa).

Position 14-19 (G14–T19) interacts with ATP. S18 is a Mg(2+) binding site. Residues D36, R60, and G82 each contribute to the substrate site. Residue R120 coordinates ATP. R147 is a substrate binding site.

The protein belongs to the shikimate kinase family. As to quaternary structure, monomer. Mg(2+) is required as a cofactor.

It localises to the cytoplasm. It carries out the reaction shikimate + ATP = 3-phosphoshikimate + ADP + H(+). It functions in the pathway metabolic intermediate biosynthesis; chorismate biosynthesis; chorismate from D-erythrose 4-phosphate and phosphoenolpyruvate: step 5/7. Catalyzes the specific phosphorylation of the 3-hydroxyl group of shikimic acid using ATP as a cosubstrate. This Chlorobaculum parvum (strain DSM 263 / NCIMB 8327) (Chlorobium vibrioforme subsp. thiosulfatophilum) protein is Shikimate kinase.